The primary structure comprises 228 residues: L-ribulose-5-phosphate 4-epimerase UlaF (228 aa).

Residues 26–27 (GN), 43–44 (SG), and 72–73 (SS) contribute to the substrate site. Residues aspartate 74, histidine 93, and histidine 95 each contribute to the Zn(2+) site. Residue aspartate 118 is the Proton donor/acceptor of the active site. Histidine 167 contributes to the Zn(2+) binding site. Tyrosine 225 serves as the catalytic Proton donor/acceptor.

Belongs to the aldolase class II family. AraD/FucA subfamily. The cofactor is Zn(2+).

It catalyses the reaction L-ribulose 5-phosphate = D-xylulose 5-phosphate. It participates in cofactor degradation; L-ascorbate degradation; D-xylulose 5-phosphate from L-ascorbate: step 4/4. Functionally, catalyzes the isomerization of L-ribulose 5-phosphate to D-xylulose 5-phosphate. Is involved in the anaerobic L-ascorbate utilization. The sequence is that of L-ribulose-5-phosphate 4-epimerase UlaF from Escherichia coli (strain 55989 / EAEC).